A 208-amino-acid chain; its full sequence is Translation initiation factor 2 subunit beta (208 aa).

The TRAM domain occupies 145–203; sequence VIEEGETYELRIESVGSKGDGIAKVDKYLIFVPNTSKGEIVKAKVKKISGTLAFAEIVE.

It belongs to the eIF-2-beta/eIF-5 family. Heterotrimer composed of an alpha, a beta and a gamma chain.

Its function is as follows. eIF-2 functions in the early steps of protein synthesis by forming a ternary complex with GTP and initiator tRNA. The polypeptide is Translation initiation factor 2 subunit beta (Methanothrix thermoacetophila (strain DSM 6194 / JCM 14653 / NBRC 101360 / PT) (Methanosaeta thermophila)).